Consider the following 160-residue polypeptide: Sec-independent protein translocase protein TatB (160 aa).

A helical membrane pass occupies residues 1–21 (MFGMGFFEILVVLIVAIIFLG). Positions 118–160 (HLNEEVSNEEALNKEVSSDESPKEVQLTTDNNAKEHDKEKEHV) are disordered. Basic and acidic residues-rich tracts occupy residues 128-140 (ALNK…ESPK) and 149-160 (NAKEHDKEKEHV).

This sequence belongs to the TatB family. The Tat system comprises two distinct complexes: a TatABC complex, containing multiple copies of TatA, TatB and TatC subunits, and a separate TatA complex, containing only TatA subunits. Substrates initially bind to the TatABC complex, which probably triggers association of the separate TatA complex to form the active translocon.

It localises to the cell inner membrane. In terms of biological role, part of the twin-arginine translocation (Tat) system that transports large folded proteins containing a characteristic twin-arginine motif in their signal peptide across membranes. Together with TatC, TatB is part of a receptor directly interacting with Tat signal peptides. TatB may form an oligomeric binding site that transiently accommodates folded Tat precursor proteins before their translocation. This Helicobacter pylori (strain J99 / ATCC 700824) (Campylobacter pylori J99) protein is Sec-independent protein translocase protein TatB.